A 341-amino-acid chain; its full sequence is tRNA N6-adenosine threonylcarbamoyltransferase (341 aa).

Positions 111 and 115 each coordinate Fe cation. Substrate is bound by residues 134–138 (LVSGG), aspartate 167, glycine 180, and asparagine 276. Aspartate 304 provides a ligand contact to Fe cation.

The protein belongs to the KAE1 / TsaD family. Requires Fe(2+) as cofactor.

It is found in the cytoplasm. The catalysed reaction is L-threonylcarbamoyladenylate + adenosine(37) in tRNA = N(6)-L-threonylcarbamoyladenosine(37) in tRNA + AMP + H(+). In terms of biological role, required for the formation of a threonylcarbamoyl group on adenosine at position 37 (t(6)A37) in tRNAs that read codons beginning with adenine. Is involved in the transfer of the threonylcarbamoyl moiety of threonylcarbamoyl-AMP (TC-AMP) to the N6 group of A37, together with TsaE and TsaB. TsaD likely plays a direct catalytic role in this reaction. The protein is tRNA N6-adenosine threonylcarbamoyltransferase of Stutzerimonas stutzeri (strain A1501) (Pseudomonas stutzeri).